We begin with the raw amino-acid sequence, 86 residues long: Putative antitoxin VapB36 (86 aa).

In terms of biological role, possibly the antitoxin component of a type II toxin-antitoxin (TA) system. Its cognate toxin is VapC36 (Potential). The sequence is that of Putative antitoxin VapB36 (vapB36) from Mycobacterium tuberculosis (strain CDC 1551 / Oshkosh).